A 222-amino-acid polypeptide reads, in one-letter code: Gamma-glutamylcyclotransferase and putative RNase MJ0434 (222 aa).

The active site involves arginine 75. The short motif at 75–82 (RDILIRKY) is the RX(4)HXY motif element. Tyrosine 82 is modified (O-di-AMP-tyrosine).

The protein in the N-terminal section; belongs to the HepT RNase toxin family. In the C-terminal section; belongs to the gamma-glutamylcyclotransferase family. Homodimer, probably forms a complex with cognate antitoxin MJ0435. Modified by cognate antitoxin MJ0435; probably at least 2 successive AMPylation events occur on Tyr-82.

In terms of biological role, probable toxic component of a putative type VII toxin-antitoxin (TA) system, probably an RNase. Probably neutralized by cognate antitoxin MJ0435. Neutralization may be due to AMPylation by MJ0435. The sequence is that of Gamma-glutamylcyclotransferase and putative RNase MJ0434 from Methanocaldococcus jannaschii (strain ATCC 43067 / DSM 2661 / JAL-1 / JCM 10045 / NBRC 100440) (Methanococcus jannaschii).